A 462-amino-acid polypeptide reads, in one-letter code: L-seryl-tRNA(Sec) selenium transferase (462 aa).

The residue at position 292 (K292) is an N6-(pyridoxal phosphate)lysine.

The protein belongs to the SelA family. The cofactor is pyridoxal 5'-phosphate.

The protein resides in the cytoplasm. It carries out the reaction L-seryl-tRNA(Sec) + selenophosphate + H(+) = L-selenocysteinyl-tRNA(Sec) + phosphate. It participates in aminoacyl-tRNA biosynthesis; selenocysteinyl-tRNA(Sec) biosynthesis; selenocysteinyl-tRNA(Sec) from L-seryl-tRNA(Sec) (bacterial route): step 1/1. Its function is as follows. Converts seryl-tRNA(Sec) to selenocysteinyl-tRNA(Sec) required for selenoprotein biosynthesis. In Clostridium perfringens (strain ATCC 13124 / DSM 756 / JCM 1290 / NCIMB 6125 / NCTC 8237 / Type A), this protein is L-seryl-tRNA(Sec) selenium transferase.